The following is a 256-amino-acid chain: 5-oxoprolinase subunit A 1 (256 aa).

It belongs to the LamB/PxpA family. Forms a complex composed of PxpA, PxpB and PxpC.

The enzyme catalyses 5-oxo-L-proline + ATP + 2 H2O = L-glutamate + ADP + phosphate + H(+). In terms of biological role, catalyzes the cleavage of 5-oxoproline to form L-glutamate coupled to the hydrolysis of ATP to ADP and inorganic phosphate. The protein is 5-oxoprolinase subunit A 1 of Pseudomonas syringae pv. tomato (strain ATCC BAA-871 / DC3000).